Consider the following 449-residue polypeptide: Ras-related GTP-binding protein D (449 aa).

The tract at residues methionine 1–tryptophan 55 is disordered. 2 stretches are compositionally biased toward acidic residues: residues aspartate 14–leucine 24 and aspartate 32–glutamate 47. GTP-binding residues include arginine 120, arginine 121, serine 122, glycine 123, lysine 124, serine 125, serine 126, and threonine 140. GDP-binding residues include arginine 121, serine 122, glycine 123, lysine 124, serine 125, serine 126, threonine 140, glutamate 144, and threonine 146. Positions 146, 169, 228, 229, and 231 each coordinate GTP. Histidine 228, lysine 229, aspartate 231, serine 269, and isoleucine 270 together coordinate GDP. Isoleucine 270 serves as a coordination point for GTP. The segment at lysine 428–leucine 449 is disordered.

The protein belongs to the GTR/RAG GTP-binding protein family. As to quaternary structure, forms a heterodimer with RRAGA in a sequence-independent manner and RRAGB. Heterodimerization stabilizes RRAG proteins. The GDP-bound form of RRAGD (in complex with the GTP-bound form of RRAGA or RRAGB), interacts with RPTOR, thereby promoting recruitment of mTORC1 to the lysosomes. Component of the lysosomal folliculin complex (LFC), composed of FLCN, FNIP1 (or FNIP2), RagA/RRAGA or RagB/RRAGB GDP-bound, RagC/RRAGC or RagD/RRAGD GTP-bound, and Ragulator. Interacts with NOL8. Interacts with SH3BP4; the interaction with this negative regulator is most probably direct, preferentially occurs with the inactive GDP-bound form of RRAGD and is negatively regulated by amino acids. The Rag heterodimer interacts with SLC38A9; the probable amino acid sensor. Interacts with SESN1, SESN2 and SESN3. The GDP-bound form interacts with TFEB. The GDP-bound form interacts with TFE3. In terms of tissue distribution, expressed in the distal tubule of the kidney.

It localises to the cytoplasm. It is found in the nucleus. The protein resides in the lysosome membrane. It catalyses the reaction GTP + H2O = GDP + phosphate + H(+). The activation of RagD/RRAGD is mediated by a GTPase activating protein (GAP). In high-amino acid conditions, activated by GTPase activating protein FLCN that stimulates RRAGD GTPase activity to turn it into its active GDP-bound form. In response to amino acid depletion, the GATOR1 complex inactivates RagC/RRAGC by securing the GTP-bound inactive form. Guanine nucleotide-binding protein that plays a crucial role in the cellular response to amino acid availability through regulation of the mTORC1 signaling cascade. Forms heterodimeric Rag complexes with RagA/RRAGA or RagB/RRAGB and cycles between an inactive GTP-bound and an active GDP-bound form: RagD/RRAGD is in its active form when GDP-bound RagD/RRAGD forms a complex with GTP-bound RagA/RRAGA (or RagB/RRAGB) and in an inactive form when GTP-bound RagD/RRAGD heterodimerizes with GDP-bound RagA/RRAGA (or RagB/RRAGB). In its active form, promotes the recruitment of mTORC1 to the lysosomes and its subsequent activation by the GTPase RHEB. This is a crucial step in the activation of the MTOR signaling cascade by amino acids. Also plays a central role in the non-canonical mTORC1 complex, which acts independently of RHEB and specifically mediates phosphorylation of MiT/TFE factors TFEB and TFE3: GDP-bound RagD/RRAGD mediates recruitment of MiT/TFE factors TFEB and TFE3. In Mus musculus (Mouse), this protein is Ras-related GTP-binding protein D.